The chain runs to 107 residues: Nucleoid-associated protein GbCGDNIH1_0260 (107 aa).

The protein belongs to the YbaB/EbfC family. Homodimer.

It is found in the cytoplasm. The protein resides in the nucleoid. Binds to DNA and alters its conformation. May be involved in regulation of gene expression, nucleoid organization and DNA protection. This is Nucleoid-associated protein GbCGDNIH1_0260 from Granulibacter bethesdensis (strain ATCC BAA-1260 / CGDNIH1).